The primary structure comprises 254 residues: Insulin-like growth factor-binding protein 4 (254 aa).

Positions 1–21 (MLPFGLVAALLLAAGPRPSLG) are cleaved as a signal peptide. Residues 23-103 (EAIHCPPCSE…MHGQGVCTEL (81 aa)) enclose the IGFBP N-terminal domain. 6 disulfides stabilise this stretch: Cys-27–Cys-53, Cys-30–Cys-55, Cys-38–Cys-56, Cys-44–Cys-59, Cys-67–Cys-80, and Cys-74–Cys-100. N-linked (GlcNAc...) asparagine glycosylation is present at Asn-125. Cys-131 and Cys-138 are disulfide-bonded. The disordered stretch occupies residues 149–169 (RSKMKVVGTPREEPRPVPQGS). The Thyroglobulin type-1 domain occupies 167–245 (QGSCQSELHR…GLEPKGELDC (79 aa)). 3 cysteine pairs are disulfide-bonded: Cys-170–Cys-200, Cys-211–Cys-222, and Cys-224–Cys-245. Ser-251 carries the phosphoserine modification.

As to quaternary structure, binds IGF2 more than IGF1.

It localises to the secreted. In terms of biological role, IGF-binding proteins prolong the half-life of the IGFs and have been shown to either inhibit or stimulate the growth promoting effects of the IGFs on cell culture. They alter the interaction of IGFs with their cell surface receptors. The chain is Insulin-like growth factor-binding protein 4 (Igfbp4) from Rattus norvegicus (Rat).